A 143-amino-acid polypeptide reads, in one-letter code: Peptide methionine sulfoxide reductase MsrB (143 aa).

Residues 16 to 139 (DAELRRRLTP…NSAALNFESR (124 aa)) form the MsrB domain. Zn(2+) contacts are provided by cysteine 55, cysteine 58, cysteine 104, and cysteine 107. Cysteine 128 (nucleophile) is an active-site residue.

Belongs to the MsrB Met sulfoxide reductase family. Requires Zn(2+) as cofactor.

It carries out the reaction L-methionyl-[protein] + [thioredoxin]-disulfide + H2O = L-methionyl-(R)-S-oxide-[protein] + [thioredoxin]-dithiol. The protein is Peptide methionine sulfoxide reductase MsrB of Burkholderia lata (strain ATCC 17760 / DSM 23089 / LMG 22485 / NCIMB 9086 / R18194 / 383).